The following is a 309-amino-acid chain: Aspartate carbamoyltransferase catalytic subunit (309 aa).

Arg58 and Thr59 together coordinate carbamoyl phosphate. L-aspartate is bound at residue Lys86. Arg108, His136, and Gln139 together coordinate carbamoyl phosphate. L-aspartate contacts are provided by Arg170 and Arg224. The carbamoyl phosphate site is built by Gly266 and Pro267.

This sequence belongs to the aspartate/ornithine carbamoyltransferase superfamily. ATCase family. Heterododecamer (2C3:3R2) of six catalytic PyrB chains organized as two trimers (C3), and six regulatory PyrI chains organized as three dimers (R2).

It carries out the reaction carbamoyl phosphate + L-aspartate = N-carbamoyl-L-aspartate + phosphate + H(+). The protein operates within pyrimidine metabolism; UMP biosynthesis via de novo pathway; (S)-dihydroorotate from bicarbonate: step 2/3. In terms of biological role, catalyzes the condensation of carbamoyl phosphate and aspartate to form carbamoyl aspartate and inorganic phosphate, the committed step in the de novo pyrimidine nucleotide biosynthesis pathway. The protein is Aspartate carbamoyltransferase catalytic subunit of Campylobacter curvus (strain 525.92).